Reading from the N-terminus, the 261-residue chain is Indole-3-glycerol phosphate synthase (261 aa).

This sequence belongs to the TrpC family.

The catalysed reaction is 1-(2-carboxyphenylamino)-1-deoxy-D-ribulose 5-phosphate + H(+) = (1S,2R)-1-C-(indol-3-yl)glycerol 3-phosphate + CO2 + H2O. Its pathway is amino-acid biosynthesis; L-tryptophan biosynthesis; L-tryptophan from chorismate: step 4/5. This chain is Indole-3-glycerol phosphate synthase, found in Burkholderia ambifaria (strain ATCC BAA-244 / DSM 16087 / CCUG 44356 / LMG 19182 / AMMD) (Burkholderia cepacia (strain AMMD)).